Here is a 196-residue protein sequence, read N- to C-terminus: Large ribosomal subunit protein uL5 (196 aa).

It belongs to the universal ribosomal protein uL5 family. As to quaternary structure, part of the 50S ribosomal subunit; part of the 5S rRNA/L5/L18/L25 subcomplex. Contacts the 5S rRNA and the P site tRNA. Forms a bridge to the 30S subunit in the 70S ribosome.

Its function is as follows. This is one of the proteins that bind and probably mediate the attachment of the 5S RNA into the large ribosomal subunit, where it forms part of the central protuberance. In the 70S ribosome it contacts protein S13 of the 30S subunit (bridge B1b), connecting the 2 subunits; this bridge is implicated in subunit movement. Contacts the P site tRNA; the 5S rRNA and some of its associated proteins might help stabilize positioning of ribosome-bound tRNAs. The polypeptide is Large ribosomal subunit protein uL5 (Rhodopirellula baltica (strain DSM 10527 / NCIMB 13988 / SH1)).